The following is a 608-amino-acid chain: Glutamine--fructose-6-phosphate aminotransferase [isomerizing] (608 aa).

C2 functions as the Nucleophile; for GATase activity in the catalytic mechanism. In terms of domain architecture, Glutamine amidotransferase type-2 spans C2 to E217. SIS domains are found at residues T285–T424 and K453–P598. The active-site For Fru-6P isomerization activity is the K603.

In terms of assembly, homodimer.

It localises to the cytoplasm. The catalysed reaction is D-fructose 6-phosphate + L-glutamine = D-glucosamine 6-phosphate + L-glutamate. In terms of biological role, catalyzes the first step in hexosamine metabolism, converting fructose-6P into glucosamine-6P using glutamine as a nitrogen source. The chain is Glutamine--fructose-6-phosphate aminotransferase [isomerizing] from Clostridium acetobutylicum (strain ATCC 824 / DSM 792 / JCM 1419 / IAM 19013 / LMG 5710 / NBRC 13948 / NRRL B-527 / VKM B-1787 / 2291 / W).